We begin with the raw amino-acid sequence, 361 residues long: Phosphoserine aminotransferase (361 aa).

Arginine 43 contributes to the L-glutamate binding site. Pyridoxal 5'-phosphate-binding positions include 77–78 (AS), tryptophan 103, threonine 153, aspartate 173, and glutamine 196. Lysine 197 is modified (N6-(pyridoxal phosphate)lysine). 238-239 (NT) contacts pyridoxal 5'-phosphate.

The protein belongs to the class-V pyridoxal-phosphate-dependent aminotransferase family. SerC subfamily. In terms of assembly, homodimer. It depends on pyridoxal 5'-phosphate as a cofactor.

The protein resides in the cytoplasm. The enzyme catalyses O-phospho-L-serine + 2-oxoglutarate = 3-phosphooxypyruvate + L-glutamate. It catalyses the reaction 4-(phosphooxy)-L-threonine + 2-oxoglutarate = (R)-3-hydroxy-2-oxo-4-phosphooxybutanoate + L-glutamate. It functions in the pathway amino-acid biosynthesis; L-serine biosynthesis; L-serine from 3-phospho-D-glycerate: step 2/3. It participates in cofactor biosynthesis; pyridoxine 5'-phosphate biosynthesis; pyridoxine 5'-phosphate from D-erythrose 4-phosphate: step 3/5. Functionally, catalyzes the reversible conversion of 3-phosphohydroxypyruvate to phosphoserine and of 3-hydroxy-2-oxo-4-phosphonooxybutanoate to phosphohydroxythreonine. This chain is Phosphoserine aminotransferase, found in Ectopseudomonas mendocina (strain ymp) (Pseudomonas mendocina).